Consider the following 170-residue polypeptide: Adenine phosphoribosyltransferase (170 aa).

It belongs to the purine/pyrimidine phosphoribosyltransferase family. Homodimer.

The protein localises to the cytoplasm. It catalyses the reaction AMP + diphosphate = 5-phospho-alpha-D-ribose 1-diphosphate + adenine. It participates in purine metabolism; AMP biosynthesis via salvage pathway; AMP from adenine: step 1/1. Its function is as follows. Catalyzes a salvage reaction resulting in the formation of AMP, that is energically less costly than de novo synthesis. In Bacillus cereus (strain G9842), this protein is Adenine phosphoribosyltransferase.